The primary structure comprises 375 residues: Trichodiene synthase (375 aa).

It belongs to the trichodiene synthase family.

The catalysed reaction is (2E,6E)-farnesyl diphosphate = trichodiene + diphosphate. It participates in sesquiterpene biosynthesis; trichothecene biosynthesis. Its function is as follows. TS is a member of the terpene cyclase group of enzymes. It catalyzes the isomerization and cyclization of farnesyl pyro-phosphate to form trichodiene, the first cyclic intermediate in the biosynthetic pathway for trichothecenes. It serves to branch trichothecene biosynthesis from the isoprenoid pathway. In Fusarium cerealis (Fusarium crookwellense), this protein is Trichodiene synthase (TRI5).